The sequence spans 275 residues: Large ribosomal subunit protein uL2 (275 aa).

2 disordered regions span residues 24-48 (LTTDRPHKPLTKTKQRTGGRRNAGD) and 224-264 (VMNP…NKRT). The span at 31 to 42 (KPLTKTKQRTGG) shows a compositional bias: basic residues.

The protein belongs to the universal ribosomal protein uL2 family. Part of the 50S ribosomal subunit. Forms a bridge to the 30S subunit in the 70S ribosome.

In terms of biological role, one of the primary rRNA binding proteins. Required for association of the 30S and 50S subunits to form the 70S ribosome, for tRNA binding and peptide bond formation. It has been suggested to have peptidyltransferase activity; this is somewhat controversial. Makes several contacts with the 16S rRNA in the 70S ribosome. The sequence is that of Large ribosomal subunit protein uL2 from Koribacter versatilis (strain Ellin345).